The sequence spans 333 residues: MSLTLINVLAAALIALAFVAVNAAYLVWAERRGAAFIQRRLGPVENGPWGLLQPPVDGIKLMTKQLVIPGGVDKILFMVAPVLAMFPALMSFVTIPFSENIVAHNMDIGLLVILAFASFAGLAILLAGWSSRNKYSMMAAIRAVSQTIAYEIPMLITAITVVLVSGSVDFIEIVHSQSGGFWHWNLWPLKPGLFNIFMPISFLIFFICSLAETNRAPFDLGEAESELVAGFHTEYSSMGFGLFFMGEYANIVIGACLTTLLFLGGWDCPFGLFPGVWWFLIKIYILIFTFIWIRWTFPRTTIYGLLNLSWKILIPLSLINLLLTAGFIKVFAP.

8 helical membrane passes run 8–28 (VLAA…YLVW), 75–95 (ILFM…FVTI), 108–128 (IGLL…LLAG), 154–174 (MLIT…IEIV), 191–211 (PGLF…CSLA), 251–271 (IVIG…CPFG), 273–293 (FPGV…FIWI), and 312–332 (ILIP…KVFA).

The protein belongs to the complex I subunit 1 family. NDH-1 is composed of 14 different subunits. Subunits NuoA, H, J, K, L, M, N constitute the membrane sector of the complex.

It localises to the cell inner membrane. The enzyme catalyses a quinone + NADH + 5 H(+)(in) = a quinol + NAD(+) + 4 H(+)(out). Its function is as follows. NDH-1 shuttles electrons from NADH, via FMN and iron-sulfur (Fe-S) centers, to quinones in the respiratory chain. The immediate electron acceptor for the enzyme in this species is believed to be ubiquinone. Couples the redox reaction to proton translocation (for every two electrons transferred, four hydrogen ions are translocated across the cytoplasmic membrane), and thus conserves the redox energy in a proton gradient. This subunit may bind ubiquinone. The chain is NADH-quinone oxidoreductase subunit H from Desulfotalea psychrophila (strain LSv54 / DSM 12343).